The primary structure comprises 704 residues: Elongation factor G (704 aa).

A tr-type G domain is found at Ala8–Val290. Residues Ala17–Thr24, Asp88–His92, and Asn142–Asp145 contribute to the GTP site. Residues Lys504 and Lys643 each carry the N6-acetyllysine modification.

This sequence belongs to the TRAFAC class translation factor GTPase superfamily. Classic translation factor GTPase family. EF-G/EF-2 subfamily.

It localises to the cytoplasm. Catalyzes the GTP-dependent ribosomal translocation step during translation elongation. During this step, the ribosome changes from the pre-translocational (PRE) to the post-translocational (POST) state as the newly formed A-site-bound peptidyl-tRNA and P-site-bound deacylated tRNA move to the P and E sites, respectively. Catalyzes the coordinated movement of the two tRNA molecules, the mRNA and conformational changes in the ribosome. This is Elongation factor G from Escherichia coli O17:K52:H18 (strain UMN026 / ExPEC).